The sequence spans 376 residues: Queuine tRNA-ribosyltransferase (376 aa).

Catalysis depends on D93, which acts as the Proton acceptor. Residues 93 to 97, D147, Q190, and G217 each bind substrate; that span reads DSGGF. The segment at 248–254 is RNA binding; it reads GVGKPDD. D267 functions as the Nucleophile in the catalytic mechanism. Positions 305, 307, 310, and 336 each coordinate Zn(2+).

This sequence belongs to the queuine tRNA-ribosyltransferase family. As to quaternary structure, homodimer. Within each dimer, one monomer is responsible for RNA recognition and catalysis, while the other monomer binds to the replacement base PreQ1. It depends on Zn(2+) as a cofactor.

The catalysed reaction is 7-aminomethyl-7-carbaguanine + guanosine(34) in tRNA = 7-aminomethyl-7-carbaguanosine(34) in tRNA + guanine. It functions in the pathway tRNA modification; tRNA-queuosine biosynthesis. Functionally, catalyzes the base-exchange of a guanine (G) residue with the queuine precursor 7-aminomethyl-7-deazaguanine (PreQ1) at position 34 (anticodon wobble position) in tRNAs with GU(N) anticodons (tRNA-Asp, -Asn, -His and -Tyr). Catalysis occurs through a double-displacement mechanism. The nucleophile active site attacks the C1' of nucleotide 34 to detach the guanine base from the RNA, forming a covalent enzyme-RNA intermediate. The proton acceptor active site deprotonates the incoming PreQ1, allowing a nucleophilic attack on the C1' of the ribose to form the product. After dissociation, two additional enzymatic reactions on the tRNA convert PreQ1 to queuine (Q), resulting in the hypermodified nucleoside queuosine (7-(((4,5-cis-dihydroxy-2-cyclopenten-1-yl)amino)methyl)-7-deazaguanosine). The chain is Queuine tRNA-ribosyltransferase from Jannaschia sp. (strain CCS1).